The primary structure comprises 198 residues: Recombination protein RecR (198 aa).

A C4-type zinc finger spans residues 57 to 72 (CSVCGHITDRDPCYIC). Positions 80-175 (SVVCVVQEPK…KVTRIAHGLP (96 aa)) constitute a Toprim domain.

It belongs to the RecR family.

May play a role in DNA repair. It seems to be involved in an RecBC-independent recombinational process of DNA repair. It may act with RecF and RecO. This Bacillus mycoides (strain KBAB4) (Bacillus weihenstephanensis) protein is Recombination protein RecR.